The following is a 215-amino-acid chain: LexA repressor (215 aa).

Residues 28-48 (RAEIAAELGFSSPNAAEEHLR) constitute a DNA-binding region (H-T-H motif). Catalysis depends on for autocatalytic cleavage activity residues Ser133 and Lys170.

The protein belongs to the peptidase S24 family. As to quaternary structure, homodimer.

It carries out the reaction Hydrolysis of Ala-|-Gly bond in repressor LexA.. Functionally, represses a number of genes involved in the response to DNA damage (SOS response), including recA and lexA. In the presence of single-stranded DNA, RecA interacts with LexA causing an autocatalytic cleavage which disrupts the DNA-binding part of LexA, leading to derepression of the SOS regulon and eventually DNA repair. This chain is LexA repressor, found in Burkholderia ambifaria (strain ATCC BAA-244 / DSM 16087 / CCUG 44356 / LMG 19182 / AMMD) (Burkholderia cepacia (strain AMMD)).